The chain runs to 206 residues: Large ribosomal subunit protein uL3 (206 aa).

The protein belongs to the universal ribosomal protein uL3 family. Part of the 50S ribosomal subunit. Forms a cluster with proteins L14 and L19.

Its function is as follows. One of the primary rRNA binding proteins, it binds directly near the 3'-end of the 23S rRNA, where it nucleates assembly of the 50S subunit. The protein is Large ribosomal subunit protein uL3 of Cytophaga hutchinsonii (strain ATCC 33406 / DSM 1761 / CIP 103989 / NBRC 15051 / NCIMB 9469 / D465).